The chain runs to 124 residues: Phosphoribosyl-ATP pyrophosphatase (124 aa).

Belongs to the PRA-PH family.

It is found in the cytoplasm. The catalysed reaction is 1-(5-phospho-beta-D-ribosyl)-ATP + H2O = 1-(5-phospho-beta-D-ribosyl)-5'-AMP + diphosphate + H(+). The protein operates within amino-acid biosynthesis; L-histidine biosynthesis; L-histidine from 5-phospho-alpha-D-ribose 1-diphosphate: step 2/9. In Ralstonia nicotianae (strain ATCC BAA-1114 / GMI1000) (Ralstonia solanacearum), this protein is Phosphoribosyl-ATP pyrophosphatase (hisE).